A 341-amino-acid chain; its full sequence is Methionine import ATP-binding protein MetN (341 aa).

The ABC transporter domain maps to 9–247; that stretch reads ISVQKVNKEI…PRSSITEELF (239 aa). 41–48 serves as a coordination point for ATP; that stretch reads GHSGSGKS.

The protein belongs to the ABC transporter superfamily. Methionine importer (TC 3.A.1.24) family. The complex is composed of two ATP-binding proteins (MetN), two transmembrane proteins (MetI) and a solute-binding protein (MetQ).

It is found in the cell inner membrane. It carries out the reaction L-methionine(out) + ATP + H2O = L-methionine(in) + ADP + phosphate + H(+). It catalyses the reaction D-methionine(out) + ATP + H2O = D-methionine(in) + ADP + phosphate + H(+). In terms of biological role, part of the ABC transporter complex MetNIQ involved in methionine import. Responsible for energy coupling to the transport system. This Chlamydia caviae (strain ATCC VR-813 / DSM 19441 / 03DC25 / GPIC) (Chlamydophila caviae) protein is Methionine import ATP-binding protein MetN.